Reading from the N-terminus, the 396-residue chain is L-lactate dehydrogenase (396 aa).

The FMN hydroxy acid dehydrogenase domain maps to 1-380 (MIISAASDYR…TQDSLVQGLG (380 aa)). Tyrosine 24 provides a ligand contact to substrate. FMN contacts are provided by serine 106 and glutamine 127. Tyrosine 129 contributes to the substrate binding site. Residue threonine 155 participates in FMN binding. Arginine 164 is a binding site for substrate. Lysine 251 is a binding site for FMN. The active-site Proton acceptor is the histidine 275. Arginine 278 contacts substrate. 306–330 (DSGIRNGLDVVRMIALGADTILLGR) contributes to the FMN binding site.

It belongs to the FMN-dependent alpha-hydroxy acid dehydrogenase family. FMN is required as a cofactor.

It is found in the cell inner membrane. It carries out the reaction (S)-lactate + A = pyruvate + AH2. Functionally, catalyzes the conversion of L-lactate to pyruvate. Is coupled to the respiratory chain. The protein is L-lactate dehydrogenase of Escherichia coli O81 (strain ED1a).